Reading from the N-terminus, the 670-residue chain is DNA ligase (670 aa).

NAD(+) contacts are provided by residues 32–36 (DAEYD), 81–82 (SL), and Glu-111. Residue Lys-113 is the N6-AMP-lysine intermediate of the active site. Residues Arg-134, Glu-171, Lys-290, and Lys-314 each coordinate NAD(+). Zn(2+)-binding residues include Cys-408, Cys-411, Cys-426, and Cys-432. The BRCT domain maps to 591-670 (EEALSLKGQT…DGLLAVLAGE (80 aa)).

It belongs to the NAD-dependent DNA ligase family. LigA subfamily. The cofactor is Mg(2+). Mn(2+) serves as cofactor.

It carries out the reaction NAD(+) + (deoxyribonucleotide)n-3'-hydroxyl + 5'-phospho-(deoxyribonucleotide)m = (deoxyribonucleotide)n+m + AMP + beta-nicotinamide D-nucleotide.. Functionally, DNA ligase that catalyzes the formation of phosphodiester linkages between 5'-phosphoryl and 3'-hydroxyl groups in double-stranded DNA using NAD as a coenzyme and as the energy source for the reaction. It is essential for DNA replication and repair of damaged DNA. The polypeptide is DNA ligase (Shewanella sediminis (strain HAW-EB3)).